Reading from the N-terminus, the 507-residue chain is Prolyl carboxy peptidase like protein 5 (507 aa).

A signal peptide spans 1-16; the sequence is MNIFISLAILIATTHC. An N-linked (GlcNAc...) asparagine glycan is attached at asparagine 125. Catalysis depends on serine 172, which acts as the Charge relay system. N-linked (GlcNAc...) asparagine glycans are attached at residues asparagine 332 and asparagine 407. Catalysis depends on charge relay system residues aspartate 439 and histidine 466.

It belongs to the peptidase S28 family.

In Caenorhabditis elegans, this protein is Prolyl carboxy peptidase like protein 5.